A 337-amino-acid chain; its full sequence is DNA-directed RNA polymerase subunit alpha (337 aa).

Positions 1 to 233 are alpha N-terminal domain (alpha-NTD); it reads MVREEIAEST…DLFVPFLHAE (233 aa). The interval 266–337 is alpha C-terminal domain (alpha-CTD); it reads GIPLKYIFID…FAVDLPKVLI (72 aa).

This sequence belongs to the RNA polymerase alpha chain family. In terms of assembly, in plastids the minimal PEP RNA polymerase catalytic core is composed of four subunits: alpha, beta, beta', and beta''. When a (nuclear-encoded) sigma factor is associated with the core the holoenzyme is formed, which can initiate transcription.

Its subcellular location is the plastid. The protein resides in the chloroplast. It carries out the reaction RNA(n) + a ribonucleoside 5'-triphosphate = RNA(n+1) + diphosphate. DNA-dependent RNA polymerase catalyzes the transcription of DNA into RNA using the four ribonucleoside triphosphates as substrates. In Dioscorea elephantipes (Elephant's foot yam), this protein is DNA-directed RNA polymerase subunit alpha.